The sequence spans 73 residues: Translation initiation factor IF-1 (73 aa).

In terms of domain architecture, S1-like spans 1–72; it reads MAKEDAIEVE…NRGRITYRSK (72 aa).

Belongs to the IF-1 family. Component of the 30S ribosomal translation pre-initiation complex which assembles on the 30S ribosome in the order IF-2 and IF-3, IF-1 and N-formylmethionyl-tRNA(fMet); mRNA recruitment can occur at any time during PIC assembly.

It localises to the cytoplasm. One of the essential components for the initiation of protein synthesis. Stabilizes the binding of IF-2 and IF-3 on the 30S subunit to which N-formylmethionyl-tRNA(fMet) subsequently binds. Helps modulate mRNA selection, yielding the 30S pre-initiation complex (PIC). Upon addition of the 50S ribosomal subunit IF-1, IF-2 and IF-3 are released leaving the mature 70S translation initiation complex. In Syntrophobacter fumaroxidans (strain DSM 10017 / MPOB), this protein is Translation initiation factor IF-1.